We begin with the raw amino-acid sequence, 121 residues long: uncharacterized protein (121 aa).

Disordered regions lie at residues 24-43 and 100-121; these read SGRT…GRGG and DHEN…TDQR.

This is an uncharacterized protein from Homo sapiens (Human).